Here is a 180-residue protein sequence, read N- to C-terminus: MMIRNQLYRKCIIGGGRSILNGWVINGTVPNIGLRYLRSGIVTRSNEIKTLEDLSKLKNLDDVDPELIRKLINERTSELNIQNEMEMLKHIQNEERKTQDIPIKRFIRPTWMFLLMSSTFYLLGHYIWWKLEYDEVEKELDRQVTALEEELHNLIEEHRVHGENEAIKNKKHKHWYKFWS.

The N-terminal 36 residues, 1–36, are a transit peptide targeting the mitochondrion; that stretch reads MMIRNQLYRKCIIGGGRSILNGWVINGTVPNIGLRY. The Mitochondrial matrix segment spans residues 37–105; that stretch reads LRSGIVTRSN…RKTQDIPIKR (69 aa). Residues 106-128 traverse the membrane as a helical segment; it reads FIRPTWMFLLMSSTFYLLGHYIW. Residues 129-163 are a coiled coil; it reads WKLEYDEVEKELDRQVTALEEELHNLIEEHRVHGE. Residues 129 to 180 are Mitochondrial intermembrane-facing; that stretch reads WKLEYDEVEKELDRQVTALEEELHNLIEEHRVHGENEAIKNKKHKHWYKFWS.

The protein belongs to the INA17 family. In terms of assembly, component of the inner membrane assembly (INA) complex, composed of INA17 and INA22. Interacts with a subset of F(1)F(0)-ATP synthase subunits of the F(1)-domain and the peripheral stalk.

It localises to the mitochondrion inner membrane. Functionally, component of the INA complex (INAC) that promotes the biogenesis of mitochondrial F(1)F(0)-ATP synthase. INAC facilitates the assembly of the peripheral stalk and promotes the assembly of the catalytic F(1)-domain with the membrane-embedded F(0)-domain. The sequence is that of Inner membrane assembly complex subunit 17 from Vanderwaltozyma polyspora (strain ATCC 22028 / DSM 70294 / BCRC 21397 / CBS 2163 / NBRC 10782 / NRRL Y-8283 / UCD 57-17) (Kluyveromyces polysporus).